The following is a 400-amino-acid chain: Iron(III) enterobactin esterase (400 aa).

This sequence belongs to the Fes family. Monomer.

The protein localises to the cytoplasm. The catalysed reaction is Fe(III)-enterobactin + 3 H2O + H(+) = Fe(III)-[N-(2,3-dihydroxybenzoyl)-L-serine] + 2 N-(2,3-dihydroxybenzoyl)-L-serine. It carries out the reaction Fe(III)-enterobactin + H2O = Fe(III)-[N-(2,3-dihydroxybenzoyl)-L-serine]3 + H(+). It catalyses the reaction Fe(III)-[N-(2,3-dihydroxybenzoyl)-L-serine]3 + H2O + H(+) = Fe(III)-[N-(2,3-dihydroxybenzoyl)-L-serine]2 + N-(2,3-dihydroxybenzoyl)-L-serine. The enzyme catalyses Fe(III)-[N-(2,3-dihydroxybenzoyl)-L-serine]2 + H2O + H(+) = Fe(III)-[N-(2,3-dihydroxybenzoyl)-L-serine] + N-(2,3-dihydroxybenzoyl)-L-serine. The catalysed reaction is enterobactin + 3 H2O = 3 N-(2,3-dihydroxybenzoyl)-L-serine + 2 H(+). With respect to regulation, inhibited by N-ethylmaleimide. Its function is as follows. Catalyzes the hydrolysis of ferric enterobactin (Fe-Ent). Is responsible for the release of iron from ferric enterobactin. Also catalyzes the hydrolysis of iron-free enterobactin (Ent). Cleavage of ferric enterobactin results in a mixture of three hydrolysis products, 2,3-dihydroxybenzoylserine (DHBS), the linear dimer (DHBS)2 and the linear trimer (DHBS)3, while cleavage of iron-free enterobactin yields only the monomer. Hydrolysis of ferric enterobactin is less efficient than hydrolysis of unliganded enterobactin. It also cleaves the aluminum (III) complex at a rate similar to the ferric complex. This is Iron(III) enterobactin esterase from Escherichia coli (strain K12).